Here is a 360-residue protein sequence, read N- to C-terminus: Tryptophan--tRNA ligase, mitochondrial (360 aa).

ATP-binding positions include Q38 and 44 to 47 (HLGN). The 'HIGH' region signature appears at 39–47 (PTGIPHLGN). D168 contributes to the L-tryptophan binding site. ATP is bound by residues 180-182 (GED) and 229-233 (KMSKS). The span at 220-230 (IRSLREPEKKM) shows a compositional bias: basic and acidic residues. A disordered region spans residues 220–241 (IRSLREPEKKMSKSSGGPRSRI). Residues 229 to 233 (KMSKS) carry the 'KMSKS' region motif.

It belongs to the class-I aminoacyl-tRNA synthetase family.

The protein localises to the mitochondrion matrix. The catalysed reaction is tRNA(Trp) + L-tryptophan + ATP = L-tryptophyl-tRNA(Trp) + AMP + diphosphate + H(+). Catalyzes the attachment of tryptophan to tRNA(Trp). This is Tryptophan--tRNA ligase, mitochondrial from Caenorhabditis elegans.